The primary structure comprises 1355 residues: MVCAMQEVAAVQHQQQQQQLQLPQQQQQQQQTTQQQHATTIVLLTGNGGGNLHIVATPQQHQPMHQLHHQHQHQHQHQQQAKSQQLKQQHSALVKLLESAPIKQQQQTPKQIVYLQQQQQQPQRKRLKNEAAIVQQQQQTPATLVKTTTTSNSNSNNTQTTNSISQQQQQHQIVLQHQQPAAAATPKPCADLSAKNDSESGIDEDSPNSDEDCPNANPAGTSLEDSSYEQYQCPWKKIRYARELKQRELEQQQTTGGSNAQQQVEAKPAAIPTSNIKQLHCDSPFSAQTHKEIANLLRQQSQQQQVVATQQQQQQQQQHQHQQQRRDSSDSNCSLMSNSSNSSAGNCCTCNAGDDQQLEEMDEAHDSGCDDELCEQHHQRLDSSQLNYLCQKFDEKLDTALSNSSANTGRNTPAVTANEDADGFFRRSIQQKIQYRPCTKNQQCSILRINRNRCQYCRLKKCIAVGMSRDAVRFGRVPKREKARILAAMQQSTQNRGQQRALATELDDQPRLLAAVLRAHLETCEFTKEKVSAMRQRARDCPSYSMPTLLACPLNPAPELQSEQEFSQRFAHVIRGVIDFAGMIPGFQLLTQDDKFTLLKAGLFDALFVRLICMFDSSINSIICLNGQVMRRDAIQNGANARFLVDSTFNFAERMNSMNLTDAEIGLFCAIVLITPDRPGLRNLELIEKMYSRLKGCLQYIVAQNRPDQPEFLAKLLETMPDLRTLSTLHTEKLVVFRTEHKELLRQQMWSMEDGNNSDGQQNKSPSGSWADAMDVEAAKSPLGSVSSTESADLDYGSPSSSQPQGVSLPSPPQQQPSALASSAPLLAATLSGGCPLRNRANSGSSGDSGAAEMDIVGSHAHLTQNGLTITPIVRHQQQQQQQQQIGILNNAHSRNLNGGHAMCQQQQQHPQLHHHLTAGAARYRKLDSPTDSGIESGNEKNECKAVSSGGSSSCSSPRSSVDDALDCSDAAANHNQVVQHPQLSVVSVSPVRSPQPSTSSHLKRQIVEDMPVLKRVLQAPPLYDTNSLMDEAYKPHKKFRALRHREFETAEADASSSTSGSNSLSAGSPRQSPVPNSVATPPPSAASAAAGNPAQSQLHMHLTRSSPKASMASSHSVLAKSLMAEPRMTPEQMKRSDIIQNYLKRENSTAASSTTNGVGNRSPSSSSTPPPSAVQNQQRWGSSSVITTTCQQRQQSVSPHSNGSSSSSSSSSSSSSSSSSTSSNCSSSSASSCQYFQSPHSTSNGTSAPASSSSGSNSATPLLELQVDIADSAQPLNLSKKSPTPPPSKLHALVAAANAVQRYPTLSADVTVTASNGGPPSAAASPAPSSSPPASVGSPNPGLSAAVHKVMLEA.

4 disordered regions span residues 60–91, 126–228, 248–268, and 308–344; these read QHQPMHQLHHQHQHQHQHQQQAKSQQLKQQHS, RLKN…DSSY, ELEQQQTTGGSNAQQQVEAKP, and ATQQQQQQQQQHQHQQQRRDSSDSNCSLMSNSSNSSA. Basic residues predominate over residues 66-76; that stretch reads QLHHQHQHQHQ. Low complexity-rich tracts occupy residues 77 to 91 and 143 to 179; these read HQQQAKSQQLKQQHS and TLVKTTTTSNSNSNNTQTTNSISQQQQQHQIVLQHQQ. Residues 200–213 show a composition bias toward acidic residues; sequence SGIDEDSPNSDEDC. Polar residues-rich tracts occupy residues 218–228 and 254–264; these read PAGTSLEDSSY and TTGGSNAQQQV. Composition is skewed to low complexity over residues 308–321 and 330–344; these read ATQQQQQQQQQHQH and DSNCSLMSNSSNSSA. Positions 384 to 474 form a DNA-binding region, nuclear receptor; it reads SQLNYLCQKF…VGMSRDAVRF (91 aa). Residues 387-421 form an NR C4-type; degenerate zinc finger; that stretch reads NYLCQKFDEKLDTALSNSSANTGRNTPAVTANEDA. The NR C4-type zinc finger occupies 438–457; sequence CTKNQQCSILRINRNRCQYC. The 249-residue stretch at 508-756 folds into the NR LBD domain; it reads DQPRLLAAVL…QQMWSMEDGN (249 aa). Disordered regions lie at residues 780 to 821, 927 to 964, 987 to 1007, 1051 to 1117, 1147 to 1260, and 1312 to 1344; these read KSPL…SALA, LDSPTDSGIESGNEKNECKAVSSGGSSSCSSPRSSVDD, VSVSPVRSPQPSTSSHLKRQI, AEAD…SSHS, ENST…SNSA, and TVTASNGGPPSAAASPAPSSSPPASVGSPNPGL. Composition is skewed to low complexity over residues 797-809, 948-960, 987-1001, 1053-1098, and 1106-1117; these read GSPSSSQPQGVSL, SSGGSSSCSSPRS, VSVSPVRSPQPSTSS, ADAS…AQSQ, and SSPKASMASSHS. Polar residues-rich tracts occupy residues 1149–1162 and 1174–1196; these read STAASSTTNGVGNR and AVQNQQRWGSSSVITTTCQQRQQ. Composition is skewed to low complexity over residues 1197 to 1233, 1242 to 1260, and 1315 to 1343; these read SVSPHSNGSSSSSSSSSSSSSSSSSTSSNCSSSSASS, STSNGTSAPASSSSGSNSA, and ASNGGPPSAAASPAPSSSPPASVGSPNPG.

Belongs to the nuclear hormone receptor family. NR1 subfamily.

It is found in the nucleus. Functionally, implicated in the regulation of ecdysone-triggered gene hierarchies. Probably plays a key role in mediating the regulation of the larval molt by 20-OH-ecdysone. The protein is Ecdysone-induced protein 75B, isoform A (Eip75B) of Drosophila melanogaster (Fruit fly).